Consider the following 89-residue polypeptide: DNA-directed RNA polymerase subunit Rpo6 (89 aa).

Belongs to the archaeal Rpo6/eukaryotic RPB6 RNA polymerase subunit family. Part of the RNA polymerase complex.

Its subcellular location is the cytoplasm. It carries out the reaction RNA(n) + a ribonucleoside 5'-triphosphate = RNA(n+1) + diphosphate. Functionally, DNA-dependent RNA polymerase (RNAP) catalyzes the transcription of DNA into RNA using the four ribonucleoside triphosphates as substrates. In Aeropyrum pernix (strain ATCC 700893 / DSM 11879 / JCM 9820 / NBRC 100138 / K1), this protein is DNA-directed RNA polymerase subunit Rpo6.